Consider the following 312-residue polypeptide: MVREDRSTWKANYFTKLVELFEEYPKCLLVGVDNVGSKQMQEIRQAMRGHAEILMGKNTMIRKALRGHLGKNPSLEKLLPHIVENVGFVFTKEDLGEIRSKLLENRKGAPAKAGAIAPCDVKLPPQNTGMGPEKTSFFQALQIPTKIARGTIEILNDVHLIKEGDKVGASESALLNMLGVTPFSYGLVVRQVYDDGTLYTPEVLDMTTEELRKRFLSGVRNVASVSLAVNYPTLASVAHSLANGLQNMLGVAAVTDVSFKEAETIKAFIADPSKFAAAAPAAAAAPAAAAPAAKKEEPKEESDDDMGFGLFD.

A disordered region spans residues 287-312; the sequence is AAAAPAAKKEEPKEESDDDMGFGLFD.

It belongs to the universal ribosomal protein uL10 family. As to quaternary structure, P0 forms a pentameric complex by interaction with dimers of P1 and P2. Phosphorylated.

Ribosomal protein P0 is the functional equivalent of E.coli protein L10. The polypeptide is Large ribosomal subunit protein uL10 (Caenorhabditis elegans).